Reading from the N-terminus, the 241-residue chain is Carboxy-S-adenosyl-L-methionine synthase (241 aa).

Residues Y38, 63-65 (GCS), 88-89 (DN), 116-117 (DI), N131, and R198 each bind S-adenosyl-L-methionine.

Belongs to the class I-like SAM-binding methyltransferase superfamily. Cx-SAM synthase family. Homodimer.

It carries out the reaction prephenate + S-adenosyl-L-methionine = carboxy-S-adenosyl-L-methionine + 3-phenylpyruvate + H2O. Functionally, catalyzes the conversion of S-adenosyl-L-methionine (SAM) to carboxy-S-adenosyl-L-methionine (Cx-SAM). In Haemophilus influenzae (strain ATCC 51907 / DSM 11121 / KW20 / Rd), this protein is Carboxy-S-adenosyl-L-methionine synthase.